The chain runs to 843 residues: Adenylate cyclase (843 aa).

Residues 1–542 (MECNLAQAKQ…NLRQSFPSTI (542 aa)) are catalytic. The tract at residues 549 to 843 (SDLLNQCEIR…VPFKFRQMNK (295 aa)) is regulatory.

This sequence belongs to the adenylyl cyclase class-1 family.

It localises to the cytoplasm. The catalysed reaction is ATP = 3',5'-cyclic AMP + diphosphate. Its function is as follows. Plays an essential role in competence development. This is Adenylate cyclase (cyaA) from Haemophilus influenzae (strain ATCC 51907 / DSM 11121 / KW20 / Rd).